The chain runs to 141 residues: Large ribosomal subunit protein uL11 (141 aa).

It belongs to the universal ribosomal protein uL11 family. Part of the ribosomal stalk of the 50S ribosomal subunit. Interacts with L10 and the large rRNA to form the base of the stalk. L10 forms an elongated spine to which L12 dimers bind in a sequential fashion forming a multimeric L10(L12)X complex. One or more lysine residues are methylated.

In terms of biological role, forms part of the ribosomal stalk which helps the ribosome interact with GTP-bound translation factors. This is Large ribosomal subunit protein uL11 from Streptococcus mutans serotype c (strain ATCC 700610 / UA159).